Consider the following 880-residue polypeptide: Interference hedgehog (880 aa).

An N-terminal signal peptide occupies residues Met1–Ala20. Residues Ile21–Thr703 are Extracellular-facing. 4 Ig-like C2-type domains span residues Pro45–Leu142, Pro132–Gln232, Pro252–Val340, and Pro346–Asn432. Intrachain disulfides connect Cys68-Cys126, Cys173-Cys220, Cys276-Cys324, and Cys367-Cys414. N-linked (GlcNAc...) asparagine glycans are attached at residues Asn102 and Asn209. The interval Gly426 to Val467 is disordered. Fibronectin type-III domains are found at residues Pro461–Gly567 and Val575–Pro670. Residue Asn466 is glycosylated (N-linked (GlcNAc...) asparagine). Residues Arg497, Lys501, Lys503, and Arg541 each coordinate heparin. Asn557 is a glycosylation site (N-linked (GlcNAc...) asparagine). Residues Leu662–Asn697 form a disordered region. Polar residues-rich tracts occupy residues Gly665–Pro678 and Thr688–Asn697. The N-linked (GlcNAc...) asparagine glycan is linked to Asn693. A helical transmembrane segment spans residues Gly704–Cys724. Residues Arg725–Val880 lie on the Cytoplasmic side of the membrane. 2 disordered regions span residues Thr728 to Arg762 and Gln775 to Val880. Composition is skewed to low complexity over residues Arg823–Asn837 and Ser864–Val880.

Belongs to the immunoglobulin superfamily. IHOG family. Homodimer. Heterotetramer; 2 iHog chains bind 2 hh chains when facilitated by heparin, heparin is required to promote high-affinity interactions between hh and iHog.

Its subcellular location is the membrane. Its function is as follows. Mediates response to the active Hedgehog (Hh) protein signal in embryos, functioning upstream or at the level of patched (ptc). In Drosophila sechellia (Fruit fly), this protein is Interference hedgehog.